The sequence spans 329 residues: MKFLILTALCAVTLAFVPINHQSAVETLTGQALVDYVNSAQSLFKTEHVEITEEEMKFKLMDGKYAAAHSDEIRATEQEVVLASVPATFDSRTQWSECKSIKLIRDQATCGSCWAFGAAEMISDRTCIETKGAQQPIISPDDLLSCCGSSCGNGCEGGYPIQALRWWDSKGVVTGGDYHGAGCKPYPIAPCTSGNCPESKTPSCSMSCQSGYSTAYAKDKHFGVSAYAVPKNAASIQAEIYANGPVEAAFSVYEDFYKYKSGVYKHTAGKYLGGHAIKIIGWGTESGSPYWLVANSWGVNWGESGFFKIYRGDDQCGIESAVVAGKAKV.

The signal sequence occupies residues 1-15 (MKFLILTALCAVTLA). A propeptide spans 16 to 84 (FVPINHQSAV…ATEQEVVLAS (69 aa)) (activation peptide). 6 disulfide bridges follow: Cys98-Cys127, Cys110-Cys155, Cys146-Cys204, Cys147-Cys151, Cys183-Cys208, and Cys191-Cys196. The active site involves Cys113. Residues His275 and Asn295 contribute to the active site.

The protein belongs to the peptidase C1 family. In terms of tissue distribution, larvae exhibit strong expression in gut cells and weak expression in hypodermal cells. Adults exhibit the reverse: strong expression in hypodermal cells and weaker expression in gut cells.

Thiol protease. Has a role as a digestive enzyme. In Caenorhabditis elegans, this protein is Gut-specific cysteine proteinase (cpr-1).